Reading from the N-terminus, the 275-residue chain is Fos-related antigen 1 (275 aa).

Disordered stretches follow at residues M1–Q33 and T71–E115. Low complexity predominate over residues E7 to Q33. In terms of domain architecture, bZIP spans E107–H170. The segment at R109–K129 is basic motif. A leucine-zipper region spans residues L135 to L163. The span at R171 to T184 shows a compositional bias: basic and acidic residues. Positions R171–L275 are disordered. 3 stretches are compositionally biased toward low complexity: residues G185–G194, L219–L237, and S256–L275. S269 bears the Phosphoserine mark.

This sequence belongs to the bZIP family. Fos subfamily. As to quaternary structure, heterodimer. Interacts with the BAF multiprotein chromatin-remodeling complex subunits SMARCB1 and SMARCD1. Interacts with ARID1A and JUN.

The protein resides in the nucleus. The polypeptide is Fos-related antigen 1 (Fosl1) (Rattus norvegicus (Rat)).